The chain runs to 658 residues: Threonine--tRNA ligase (658 aa).

The TGS domain maps to 1–61; that stretch reads MSDVRVIIQR…RDGESVEPVE (61 aa). The segment at 259 to 554 is catalytic; that stretch reads DHRKLGNELD…LLEHYAGAFP (296 aa). Residues Cys353, His404, and His531 each contribute to the Zn(2+) site.

The protein belongs to the class-II aminoacyl-tRNA synthetase family. As to quaternary structure, homodimer. Zn(2+) serves as cofactor.

It localises to the cytoplasm. It catalyses the reaction tRNA(Thr) + L-threonine + ATP = L-threonyl-tRNA(Thr) + AMP + diphosphate + H(+). Functionally, catalyzes the attachment of threonine to tRNA(Thr) in a two-step reaction: L-threonine is first activated by ATP to form Thr-AMP and then transferred to the acceptor end of tRNA(Thr). Also edits incorrectly charged L-seryl-tRNA(Thr). The sequence is that of Threonine--tRNA ligase from Streptomyces griseus subsp. griseus (strain JCM 4626 / CBS 651.72 / NBRC 13350 / KCC S-0626 / ISP 5235).